A 435-amino-acid polypeptide reads, in one-letter code: Glutamyl-tRNA reductase (435 aa).

Substrate is bound by residues 50–53, Ser110, 115–117, and Gln121; these read TCNR and ETQ. Cys51 functions as the Nucleophile in the catalytic mechanism. 189–194 lines the NADP(+) pocket; that stretch reads GAGEMS.

The protein belongs to the glutamyl-tRNA reductase family. As to quaternary structure, homodimer.

The catalysed reaction is (S)-4-amino-5-oxopentanoate + tRNA(Glu) + NADP(+) = L-glutamyl-tRNA(Glu) + NADPH + H(+). Its pathway is porphyrin-containing compound metabolism; protoporphyrin-IX biosynthesis; 5-aminolevulinate from L-glutamyl-tRNA(Glu): step 1/2. Functionally, catalyzes the NADPH-dependent reduction of glutamyl-tRNA(Glu) to glutamate 1-semialdehyde (GSA). The protein is Glutamyl-tRNA reductase of Campylobacter lari (strain RM2100 / D67 / ATCC BAA-1060).